Reading from the N-terminus, the 228-residue chain is Interleukin-27 subunit beta (228 aa).

The N-terminal stretch at 1–18 (MSKLLFLSLALWASRSPG) is a signal peptide. Fibronectin type-III domains lie at 26–124 (ALSQ…VAER) and 127–224 (KPDP…VESA). N-linked (GlcNAc...) asparagine glycosylation is found at Asn-54 and Asn-104.

The protein belongs to the type I cytokine receptor family. Type 3 subfamily. As to quaternary structure, heterodimer with IL27/IL27A; not disulfide-linked. This heterodimer is known as interleukin IL-27. Heterodimer with IL12A; not disulfide-linked. This heterodimer is known as interleukin IL-35. Interacts with SQSTM1.

It is found in the secreted. Associates with IL27 to form the IL-27 interleukin, a heterodimeric cytokine which functions in innate immunity. IL-27 has pro- and anti-inflammatory properties, that can regulate T-helper cell development, suppress T-cell proliferation, stimulate cytotoxic T-cell activity, induce isotype switching in B-cells, and that has diverse effects on innate immune cells. Among its target cells are CD4 T-helper cells which can differentiate in type 1 effector cells (TH1), type 2 effector cells (TH2) and IL17 producing helper T-cells (TH17). It drives rapid clonal expansion of naive but not memory CD4 T-cells. It also strongly synergizes with IL-12 to trigger interferon-gamma/IFN-gamma production of naive CD4 T-cells, binds to the cytokine receptor WSX-1/TCCR. Another important role of IL-27 is its antitumor activity as well as its antiangiogenic activity with activation of production of antiangiogenic chemokines. The sequence is that of Interleukin-27 subunit beta (Ebi3) from Mus musculus (Mouse).